A 1241-amino-acid chain; its full sequence is MIENWPKKPEGSQWTDDQWKAVVANGRDILVAAAAGSGKTAVLVERIIKKIINEENPVDVDRLLVVTFTNAAAQEMKNRIGEALEKVLIDEPGSQHIRKQLSLLNKASISTIHSFCLQVIRGYYYMLDVDPRFRIANQTENELLKEEVLDDILEEEYGIEDNTIFFELVDRYTSDRSDDDLQRMILALHTESRAHPNPEKWLDKLVEAYDVEGKTIEDLVYASYLLEDVKFQLETAEQHIRKATELAMLPDGPAPRVETLQADLALLGTLSSAARESWTSVYEAMQNVSWQTLKRIKKSDYNEDVVKQVDSLRNKAKDEVKKLQEELFSRKPESFLRDFQDMHPVLEKLVQLVKVFTERFQAMKRDKGMVDFTDLEHFCLQILSEQSEEGEMKPSAVALQYRNKFAEVLVDEYQDTNFVQESIIKFVTKDSESEGNLFMVGDVKQSIYRFRLAEPGLFLGKYKRFTQEGLGGGMKIDLAKNFRSRHEVLAGTNFIFKQIMGEEVGEIDYDADAELKLGASYPEGEDVAAELLCIQQTEEEVIDGEEGAEVEKAQLEARLMAQRIKAMVDSGYEVYDRKTDSMRPVQYRDFVILLRSMPWAPQIMEELKLQGIPVYADLATGYFEATEVNIMMNVFRVIDNPMQDIPLAAVLRSPIVGLNDEELATLRAHGKKGSFYEVMSSFLKGAPLEEEKELHDKLEWFYNLLQGWREFARQQSLSDLIWKVYGETGYYDFVGGLPAGKQRQANLRVLYDRARQYEATSFRGLFRFLRFIERILERGDDMGTARALGEQEDVVRIMTIHKSKGLEFPVVFVAGLGRRFNTQDLMKRFLLHKDFGFGSQFIDPRKRIKYTTLSQLAIKRKMKMELIAEEMRVLYVALTRAKEKLILIGTVKDATKEMEKWLDAREHSEWLLPDHIRAGASCYLDWIAPSLYRHRDSEILLELGQGSVPDEIYGYDTSWKVEVVDGNTLLAPEPVQEEKQELLEALREKKAVPLESERKEEVYDRLMWKYGYEEATSHRAKQSVTEIKRNYQSEEGSDNAFIKKLRAPIRTRPRFMEKKGLTYAERGTAVHAVMQHVDLKKPITEEVIREQIAGMVNKELLTFEQAEEIAIEKVISFFDSDLGKRVLAAKSVEREVPFTMMLAAEEAYQDWQGQSGESILVQGVIDCMIEEEDGITLIDFKTDTIEGKFPGGFDQAKPILEERYKVQLSLYAKALEKSLQHPVKEKCLYFFDGNHVIKVEE.

The UvrD-like helicase ATP-binding domain occupies 12–485 (SQWTDDQWKA…IDLAKNFRSR (474 aa)). 33–40 (AAAGSGKT) is a binding site for ATP. Residues 505–805 (GEIDYDADAE…RIMTIHKSKG (301 aa)) form the UvrD-like helicase C-terminal domain.

It belongs to the helicase family. AddA subfamily. In terms of assembly, heterodimer of AddA and AddB/RexB. It depends on Mg(2+) as a cofactor.

The catalysed reaction is Couples ATP hydrolysis with the unwinding of duplex DNA by translocating in the 3'-5' direction.. The enzyme catalyses ATP + H2O = ADP + phosphate + H(+). The heterodimer acts as both an ATP-dependent DNA helicase and an ATP-dependent, dual-direction single-stranded exonuclease. Recognizes the chi site generating a DNA molecule suitable for the initiation of homologous recombination. The AddA nuclease domain is required for chi fragment generation; this subunit has the helicase and 3' -&gt; 5' nuclease activities. The chain is ATP-dependent helicase/nuclease subunit A from Bacillus cereus (strain AH187).